Reading from the N-terminus, the 519-residue chain is Ribose import ATP-binding protein RbsA 2 (519 aa).

ABC transporter domains lie at 15–252 and 262–506; these read FRLR…VGRP and HEPG…TGVR. 47 to 54 is a binding site for ATP; the sequence is GENGAGKS.

It belongs to the ABC transporter superfamily. Ribose importer (TC 3.A.1.2.1) family. In terms of assembly, the complex is composed of an ATP-binding protein (RbsA), two transmembrane proteins (RbsC) and a solute-binding protein (RbsB).

It localises to the cell membrane. The enzyme catalyses D-ribose(out) + ATP + H2O = D-ribose(in) + ADP + phosphate + H(+). Its function is as follows. Part of the ABC transporter complex RbsABC involved in ribose import. Responsible for energy coupling to the transport system. In Rubrobacter xylanophilus (strain DSM 9941 / JCM 11954 / NBRC 16129 / PRD-1), this protein is Ribose import ATP-binding protein RbsA 2.